We begin with the raw amino-acid sequence, 101 residues long: Small ribosomal subunit protein bS18c (101 aa).

Belongs to the bacterial ribosomal protein bS18 family. In terms of assembly, part of the 30S ribosomal subunit.

It is found in the plastid. The protein resides in the chloroplast. The polypeptide is Small ribosomal subunit protein bS18c (rps18) (Arabidopsis thaliana (Mouse-ear cress)).